The sequence spans 132 residues: Small ribosomal subunit protein uS8 (132 aa).

Belongs to the universal ribosomal protein uS8 family. In terms of assembly, part of the 30S ribosomal subunit. Contacts proteins S5 and S12.

Its function is as follows. One of the primary rRNA binding proteins, it binds directly to 16S rRNA central domain where it helps coordinate assembly of the platform of the 30S subunit. The sequence is that of Small ribosomal subunit protein uS8 from Clavibacter michiganensis subsp. michiganensis (strain NCPPB 382).